Here is a 409-residue protein sequence, read N- to C-terminus: Lactadherin (409 aa).

EGF-like domains follow at residues 2–41 (SGDF…LICN) and 44–88 (EKGP…IHCE). 3 disulfides stabilise this stretch: cysteine 6–cysteine 17, cysteine 11–cysteine 29, and cysteine 31–cysteine 40. A glycan (N-linked (GlcNAc...) asparagine) is linked at asparagine 41. Disulfide bonds link cysteine 48–cysteine 59, cysteine 53–cysteine 76, cysteine 78–cysteine 87, cysteine 91–cysteine 247, cysteine 234–cysteine 238, and cysteine 252–cysteine 409. Residues 67-69 (RGD) carry the Cell attachment site motif. F5/8 type C domains are found at residues 91–247 (CNAP…LLGC) and 252–409 (CAEP…LLGC). The N-linked (GlcNAc...) asparagine glycan is linked to asparagine 372.

As to expression, mammary epithelial cell surfaces and spermatozoan. Also present in testis, epididymis, uterus, adrenal gland, tonsil, muscle, heart, lymphatic gland, thymus and kidney but not spleen, liver, lung or brain.

It localises to the membrane. The protein localises to the secreted. Its subcellular location is the cytoplasmic vesicle. The protein resides in the secretory vesicle. It is found in the acrosome membrane. Functionally, contributes to phagocytic removal of apoptotic cells in many tissues. Plays an important role in the maintenance of intestinal epithelial homeostasis and the promotion of mucosal healing. Promotes VEGF-dependent neovascularization. Specific ligand for the alpha-v/beta-3 and alpha-v/beta-5 receptors. Also binds to phosphatidylserine-enriched cell surfaces in a receptor-independent manner. Zona pellucida-binding protein which may play a role in gamete interaction. The polypeptide is Lactadherin (MFGE8) (Sus scrofa (Pig)).